A 141-amino-acid chain; its full sequence is Hemoglobin subunit alpha (141 aa).

Residues 1–141 (VLSPADKTNV…VSTVLTSKYR (141 aa)) form the Globin domain. At Ser-3 the chain carries Phosphoserine. The residue at position 7 (Lys-7) is an N6-succinyllysine. The residue at position 8 (Thr-8) is a Phosphothreonine. Lys-11 is modified (N6-succinyllysine). Lys-16 is modified (N6-acetyllysine; alternate). Lys-16 is modified (N6-succinyllysine; alternate). A Phosphotyrosine modification is found at Tyr-24. Ser-35 carries the post-translational modification Phosphoserine. N6-succinyllysine is present on Lys-40. At Ser-49 the chain carries Phosphoserine. His-58 is an O2 binding site. His-87 lines the heme b pocket. Ser-102 is subject to Phosphoserine. Thr-108 bears the Phosphothreonine mark. 2 positions are modified to phosphoserine: Ser-124 and Ser-131. Phosphothreonine occurs at positions 134 and 137. Residue Ser-138 is modified to Phosphoserine.

Belongs to the globin family. As to quaternary structure, heterotetramer of two alpha chains and two beta chains. In terms of tissue distribution, red blood cells.

Functionally, involved in oxygen transport from the lung to the various peripheral tissues. In terms of biological role, hemopressin acts as an antagonist peptide of the cannabinoid receptor CNR1. Hemopressin-binding efficiently blocks cannabinoid receptor CNR1 and subsequent signaling. The protein is Hemoglobin subunit alpha (HBA) of Semnopithecus entellus (Northern plains gray langur).